The sequence spans 116 residues: Large ribosomal subunit protein bL17 (116 aa).

This sequence belongs to the bacterial ribosomal protein bL17 family. Part of the 50S ribosomal subunit. Contacts protein L32.

This is Large ribosomal subunit protein bL17 from Prochlorococcus marinus (strain MIT 9211).